The following is a 439-amino-acid chain: CBL-interacting serine/threonine-protein kinase 26 (439 aa).

Positions 13 to 268 (YEVGKTLGQG…IPEVLGDAWF (256 aa)) constitute a Protein kinase domain. Residues 19 to 27 (LGQGTFAKV) and Lys42 each bind ATP. Residue Asp136 is the Proton acceptor of the active site. The tract at residues 154 to 183 (DFGLSALSRQVRGDGLLHTACGTPNYAAPE) is activation loop. Position 158 is a phosphoserine (Ser158). Phosphothreonine is present on Thr172. The NAF domain occupies 306-330 (EQPTSMNAFELISMSRALDLGNLFE). The tract at residues 336 to 365 (KRETRFAAKGAANDLVQKIEEASKPLGFDI) is PPI.

Belongs to the protein kinase superfamily. CAMK Ser/Thr protein kinase family. SNF1 subfamily. As to quaternary structure, interacts with RBOHF (via N-terminus). It depends on Mn(2+) as a cofactor.

The protein resides in the cell membrane. The catalysed reaction is L-seryl-[protein] + ATP = O-phospho-L-seryl-[protein] + ADP + H(+). It carries out the reaction L-threonyl-[protein] + ATP = O-phospho-L-threonyl-[protein] + ADP + H(+). Functionally, CIPK serine-threonine protein kinases interact with CBL proteins. Binding of a CBL protein to the regulatory NAF domain of CIPK protein lead to the activation of the kinase in a calcium-dependent manner. Involved in the calcium-dependent regulation of reactive oxygen species production by the NADPH oxidase RBOHF. This chain is CBL-interacting serine/threonine-protein kinase 26 (CIPK26), found in Arabidopsis thaliana (Mouse-ear cress).